Consider the following 640-residue polypeptide: Isoniazid-induced protein IniA (640 aa).

Residues 497–519 (IGMLSSVVGLGLFNPLSVGAGLI) form a helical membrane-spanning segment. Residues 560–628 (RDRLKMIQRL…QVNDNLAGLE (69 aa)) adopt a coiled-coil conformation.

As to quaternary structure, forms multimeric structures containing a central pore.

The protein localises to the cell membrane. Functionally, participates in the development of tolerance to both isoniazid and ethambutol. May function through a MDR-pump like mechanism, although it does not appear to directly transport isoniazid from the cell. In Mycobacterium tuberculosis (strain CDC 1551 / Oshkosh), this protein is Isoniazid-induced protein IniA (iniA).